The sequence spans 160 residues: Sec-independent protein translocase protein TatB (160 aa).

Residues 1 to 21 (MIDLGVSKIALIGAVALIVIG) traverse the membrane as a helical segment. Disordered stretches follow at residues 70–100 (ARDV…STAT) and 133–160 (RSGV…SSSF). Positions 89–100 (SDATGSDASTAT) are enriched in polar residues.

It belongs to the TatB family. In terms of assembly, the Tat system comprises two distinct complexes: a TatABC complex, containing multiple copies of TatA, TatB and TatC subunits, and a separate TatA complex, containing only TatA subunits. Substrates initially bind to the TatABC complex, which probably triggers association of the separate TatA complex to form the active translocon.

The protein resides in the cell inner membrane. Functionally, part of the twin-arginine translocation (Tat) system that transports large folded proteins containing a characteristic twin-arginine motif in their signal peptide across membranes. Together with TatC, TatB is part of a receptor directly interacting with Tat signal peptides. TatB may form an oligomeric binding site that transiently accommodates folded Tat precursor proteins before their translocation. This chain is Sec-independent protein translocase protein TatB, found in Polaromonas sp. (strain JS666 / ATCC BAA-500).